Reading from the N-terminus, the 1274-residue chain is DENN domain-containing protein 3 (1274 aa).

Residues 65–108 (GQVPGASCALGKGRRRSFRKKREKPRMEPWKSHPGDSKGPDSED) form a disordered region. The uDENN domain maps to 75–245 (GKGRRRSFRK…LIPSPPPGPL (171 aa)). The segment covering 76 to 88 (KGRRRSFRKKREK) has biased composition (basic residues). Positions 89–105 (PRMEPWKSHPGDSKGPD) are enriched in basic and acidic residues. A cDENN domain is found at 268 to 400 (IVDLDLHLPL…PLLLAQTFIQ (133 aa)). In terms of domain architecture, dDENN spans 402 to 506 (VQSLQLHPDL…KARLNGRMDA (105 aa)). The tract at residues 520–970 (RIDRMLISPR…KHKINPSAGE (451 aa)) is linker. 2 positions are modified to phosphoserine; by ULK1: Ser-554 and Ser-572. Tyr-940 carries the phosphotyrosine modification. WD repeat units follow at residues 975-1013 (AIEV…VFDA), 1019-1055 (HQHC…IINV), 1059-1099 (SCNK…AWNV), 1103-1140 (RVIS…TPQG), 1146-1181 (LKHP…MWSL), 1186-1228 (QPPQ…IYVM), and 1234-1273 (TVEK…IWKV).

As to quaternary structure, forms oligomers. Interacts with 6 of the 7 known isoforms of 14-3-3 proteins.

It localises to the cytoplasm. Guanine nucleotide exchange factor (GEF) activating Rab12. Promotes the exchange of GDP to GTP, converting inactive GDP-bound Rab12 into its active GTP-bound form. Regulates autophagy in response to starvation through Rab12 activation. Starvation leads to ULK1/2-dependent phosphorylation of Ser-554 and Ser-572, which in turn allows recruitment of 14-3-3 adapter proteins and leads to up-regulation of GEF activity towards Rab12. Also plays a role in protein transport from recycling endosomes to lysosomes, regulating, for instance, the degradation of the transferrin receptor and of the amino acid transporter PAT4. Starvation also induces phosphorylation at Tyr-940, which leads to up-regulated GEF activity and initiates autophagy. This is DENN domain-containing protein 3 (Dennd3) from Mus musculus (Mouse).